Here is a 500-residue protein sequence, read N- to C-terminus: Probable cation transporter HKT1;4 (500 aa).

Topologically, residues 1–12 are cytoplasmic; the sequence is MPTSRRALAGGA. Helical transmembrane passes span 13-33 and 74-94; these read LSMH…LLGV and LVVL…LVGL. Residues 95-156 are Cytoplasmic-facing; that stretch reads ASKWSKLRSD…ADTLRHNAVR (62 aa). A disordered region spans residues 121–145; that stretch reads ADIDGGDVENPTSSGEEAASRRRPM. 2 helical membrane-spanning segments follow: residues 157-177 and 239-259; these read ALFY…AVAV and VLAG…AAAA. Residues 260 to 290 lie on the Cytoplasmic side of the membrane; the sequence is ATRREELVEMAREGGRAAAAGYAHLMPARRC. 2 consecutive transmembrane segments (helical) span residues 291–311 and 346–366; these read WMLA…VCGM and LSIL…LPPY. Residues 367–390 lie on the Cytoplasmic side of the membrane; the sequence is TTWFPFEENSTTKDSNAENQGIRL. The next 2 membrane-spanning stretches (helical) occupy residues 391–411 and 464–484; these read LEST…AICI and GFVG…MFFG. The Cytoplasmic segment spans residues 485-500; it reads RLKKFSMKGGKAWKLS.

Belongs to the TrkH potassium transport family. HKT (TC 2.A.38.3) subfamily.

Its subcellular location is the membrane. Its function is as follows. Probable cation transporter. May be involved in regulation of potassium-sodium homeostasis. The sequence is that of Probable cation transporter HKT1;4 from Oryza sativa subsp. japonica (Rice).